We begin with the raw amino-acid sequence, 587 residues long: UDP-N-acetylmuramoylalanine--D-glutamate ligase (587 aa).

The segment at D124–D147 is disordered. Low complexity predominate over residues P132–D147. ATP is bound at residue G214 to T220.

This sequence belongs to the MurCDEF family.

The protein resides in the cytoplasm. It catalyses the reaction UDP-N-acetyl-alpha-D-muramoyl-L-alanine + D-glutamate + ATP = UDP-N-acetyl-alpha-D-muramoyl-L-alanyl-D-glutamate + ADP + phosphate + H(+). Its pathway is cell wall biogenesis; peptidoglycan biosynthesis. Functionally, cell wall formation. Catalyzes the addition of glutamate to the nucleotide precursor UDP-N-acetylmuramoyl-L-alanine (UMA). This Polaromonas sp. (strain JS666 / ATCC BAA-500) protein is UDP-N-acetylmuramoylalanine--D-glutamate ligase.